Reading from the N-terminus, the 140-residue chain is PDZ domain-containing protein 11 (140 aa).

The 83-residue stretch at 47–129 (IVTLKKPPGA…ISMRVRFFPY (83 aa)) folds into the PDZ domain.

Interacts with ATP2B1, ATP2B2, ATP2B3, ATP2B4 and ATP7A. Interacts with PLEKHA7 (via WW domains) at zonula adherens; this interaction is essential for the interaction between PLEKHA7 and the ADAM10-binding protein TSPAN33. Interacts with SLC5A6.

It localises to the cytoplasm. The protein resides in the cell junction. The protein localises to the adherens junction. Its subcellular location is the cell membrane. Its function is as follows. Mediates docking of ADAM10 to zonula adherens by interacting with PLEKHA7 which is required for PLEKHA7 to interact with the ADAM10-binding protein TSPAN33. The protein is PDZ domain-containing protein 11 (Pdzd11) of Mus musculus (Mouse).